Here is a 179-residue protein sequence, read N- to C-terminus: Ribosome maturation factor RimM (179 aa).

Positions 100 to 176 constitute a PRC barrel domain; the sequence is KEEFHLLELI…FIIINPPNGL (77 aa).

The protein belongs to the RimM family. Binds ribosomal protein uS19.

Its subcellular location is the cytoplasm. Its function is as follows. An accessory protein needed during the final step in the assembly of 30S ribosomal subunit, possibly for assembly of the head region. Essential for efficient processing of 16S rRNA. May be needed both before and after RbfA during the maturation of 16S rRNA. It has affinity for free ribosomal 30S subunits but not for 70S ribosomes. The polypeptide is Ribosome maturation factor RimM (Prochlorococcus marinus (strain MIT 9215)).